A 216-amino-acid chain; its full sequence is Adenylate kinase (216 aa).

An ATP-binding site is contributed by glycine 10 to threonine 15. The interval serine 30–valine 59 is NMP. Residues threonine 31, arginine 36, glutamine 57–valine 59, and glutamine 92 each bind AMP. Positions glycine 122–aspartate 159 are LID. Residues arginine 123 and threonine 132–tyrosine 133 contribute to the ATP site. AMP is bound by residues arginine 156 and arginine 167. Glutamine 202 serves as a coordination point for ATP.

This sequence belongs to the adenylate kinase family. In terms of assembly, monomer.

The protein localises to the cytoplasm. The catalysed reaction is AMP + ATP = 2 ADP. Its pathway is purine metabolism; AMP biosynthesis via salvage pathway; AMP from ADP: step 1/1. Functionally, catalyzes the reversible transfer of the terminal phosphate group between ATP and AMP. Plays an important role in cellular energy homeostasis and in adenine nucleotide metabolism. The protein is Adenylate kinase of Francisella philomiragia subsp. philomiragia (strain ATCC 25017 / CCUG 19701 / FSC 153 / O#319-036).